The following is a 419-amino-acid chain: Tryptophan synthase beta chain (419 aa).

Lysine 98 is modified (N6-(pyridoxal phosphate)lysine).

Belongs to the TrpB family. Tetramer of two alpha and two beta chains. Requires pyridoxal 5'-phosphate as cofactor.

It carries out the reaction (1S,2R)-1-C-(indol-3-yl)glycerol 3-phosphate + L-serine = D-glyceraldehyde 3-phosphate + L-tryptophan + H2O. It participates in amino-acid biosynthesis; L-tryptophan biosynthesis; L-tryptophan from chorismate: step 5/5. Functionally, the beta subunit is responsible for the synthesis of L-tryptophan from indole and L-serine. The polypeptide is Tryptophan synthase beta chain (Ruegeria sp. (strain TM1040) (Silicibacter sp.)).